Reading from the N-terminus, the 164-residue chain is MNNSLDYLAYPVIVSNHRQSTTFRKKLDFGHYILHKNRVQIVKPAVDTKPPMAHTHYILKLSKIQGEQKRIDKIEYENRQLCQKIANAYRGPAKVDCWNEYLSKSLNRESRNRELVRITMENQGILRRLSDRKPNYDRRSSEMDWQNSRRYIRNTTRYLLFQED.

The stretch at 61–88 (LSKIQGEQKRIDKIEYENRQLCQKIANA) forms a coiled coil.

Belongs to the CFAP97 family. In terms of tissue distribution, expressed exclusively in testis.

Its function is as follows. Required for male fertility through its role in axonemal doublet stabilization which is essential for sperm motility and fertilization. In Mus musculus (Mouse), this protein is Sperm axonemal maintenance protein CFAP97D1 (Cfap97d1).